The chain runs to 269 residues: Putative phosphoenolpyruvate synthase regulatory protein (269 aa).

ADP is bound at residue glycine 149–threonine 156.

It belongs to the pyruvate, phosphate/water dikinase regulatory protein family. PSRP subfamily.

The enzyme catalyses [pyruvate, water dikinase] + ADP = [pyruvate, water dikinase]-phosphate + AMP + H(+). The catalysed reaction is [pyruvate, water dikinase]-phosphate + phosphate + H(+) = [pyruvate, water dikinase] + diphosphate. Functionally, bifunctional serine/threonine kinase and phosphorylase involved in the regulation of the phosphoenolpyruvate synthase (PEPS) by catalyzing its phosphorylation/dephosphorylation. In Colwellia psychrerythraea (strain 34H / ATCC BAA-681) (Vibrio psychroerythus), this protein is Putative phosphoenolpyruvate synthase regulatory protein.